A 989-amino-acid chain; its full sequence is Serine-repeat antigen protein 5 (989 aa).

The signal sequence occupies residues 1-16 (MKSYISLFFILCVIFN). 2 disordered regions span residues 26–91 (SQTG…EKQD) and 165–245 (LPSN…RNLQ). 3 stretches are compositionally biased toward low complexity: residues 52–87 (QGSTGASQPGSSEPSNPVSSGHSVSTVSVSQTSTSS), 167–180 (SNGTTGEQGSSTGT), and 191–225 (SSSSSSSSSSSSSSSSSSSSSSSSSSSSSSSSSSS). Serine 167 is modified (phosphoserine). The N-linked (GlcNAc...) asparagine glycan is linked to asparagine 168. The interval 208-245 (SSSSSSSSSSSSSSSSSSESLPANGPDSPTVKPPRNLQ) is interaction with PTKL. A glycan (N-linked (GlcNAc...) asparagine) is linked at asparagine 310. The interaction with host VTN stretch occupies residues 365–382 (YKYLSEDIVSNFKEIKAE). Cysteine 437 and cysteine 489 are joined by a disulfide. Threonine 541 carries the post-translational modification Phosphothreonine. Intrachain disulfides connect cysteine 559-cysteine 564, cysteine 573-cysteine 602, cysteine 585-cysteine 628, cysteine 619-cysteine 664, and cysteine 747-cysteine 801. The thiol-protease-like stretch occupies residues 571–989 (NNCISNLQVE…TNNECYFCYV (419 aa)). Active-site residues include histidine 754 and asparagine 779. An N-linked (GlcNAc...) asparagine glycan is attached at asparagine 820. Positions 835–878 (KASPEFYHNLYFKNFNVGKKNLFSEKEDNENNKKLGNNYIIFGQ) are cleaved as a propeptide — inhibition peptide. Serine 858 bears the Phosphoserine mark.

This sequence belongs to the peptidase C1 family. As to quaternary structure, may interact (via C-terminus) with PTKL (via SAM domain). In terms of assembly, interacts (via C-terminus) with human VTN (via hemopexin repeat 2); may form heterotetramers of two VTN and SERA5 P47 heterodimers; the interaction may protect merozoites from phagocytosis by host monocytes; VTN glycosylation appears to be dispensable for the interaction. Monomer. Interacts with kinase CPK1/CDPK1 at the schizont stage. Phosphorylation by CPK1/CDPK1 increases SERA5 protease activity towards a synthetic peptide in vitro. Post-translationally, just prior to merozoite egress from host erythrocytes, proteolytically cleaved into multiple fragments. Cleaved by SUB1 into p47 and p73, p73 is further cleaved by SUB1 into p56 and p18 and p56 is further processed into p50 by an unidentified protease. p47 remains covalently associated with p18 via disulfide bond. p47 can be processed into p25n and p25c by SUB1. p25c and p25n remain associated with p18. Proteolytic processing is essential for merozoite egress from host erythrocytes. The cleavage of the propeptide to produce p50 is necessary for protease activity and to promote merozoite egress.

Its subcellular location is the parasitophorous vacuole. It localises to the secreted. It is found in the cell membrane. Plays an essential role during the asexual blood stage development by controlling the kinetics of merozoite egress from host erythrocytes. Specifically, prevents premature rupture of the parasitophorous vacuole and host erythrocyte membranes. Functionally, may prevent merozoite phagocytosis by host monocytes via interaction with host VTN at the merozoite surface. Plays a role in parasite growth. In terms of biological role, protease activity is controversial. The polypeptide is Serine-repeat antigen protein 5 (Plasmodium falciparum (isolate CDC / Honduras)).